The following is a 328-amino-acid chain: PDZ and LIM domain protein 1 (328 aa).

Thr2 carries the post-translational modification N-acetylthreonine. A PDZ domain is found at 3-85 (TLQIVLQGPG…NMTLTVARSE (83 aa)). Phosphoserine occurs at positions 90 and 130. The residue at position 144 (Tyr144) is a Phosphotyrosine. The region spanning 257–316 (PMCDKCGTGIVGVFVKLRERHRHPECYVCTDCGTNLKQKGHFFVEDQIYCEKHARERVTP) is the LIM zinc-binding domain. The Zn(2+) site is built by Cys259, Cys262, His279, Cys282, Cys285, Cys288, Cys306, and His309. Thr315 carries the post-translational modification Phosphothreonine. Tyr320 bears the Phosphotyrosine mark.

As to quaternary structure, interacts with ACTN1, ACTN2 and ACTN4. Interacts with PDLIM4.

Its subcellular location is the cytoplasm. The protein resides in the cytoskeleton. It is found in the myofibril. The protein localises to the sarcomere. It localises to the z line. In terms of biological role, cytoskeletal protein that may act as an adapter that brings other proteins (like kinases) to the cytoskeleton. Involved in assembly, disassembly and directioning of stress fibers in fibroblasts. Required for the localization of ACTN1 and PALLD to stress fibers. Required for cell migration and in maintaining cell polarity of fibroblasts. The chain is PDZ and LIM domain protein 1 (PDLIM1) from Bos taurus (Bovine).